Reading from the N-terminus, the 367-residue chain is Heparan sulfate glucosamine 3-O-sulfotransferase 2 (367 aa).

At 1-19 (MAYRVLGRAGPPQPRRARR) the chain is on the cytoplasmic side. The helical; Signal-anchor for type II membrane protein transmembrane segment at 20–39 (LLFAFTLSLSCTYLCYSFLC) threads the bilayer. Residues 40–367 (CCDGLGQSRL…ETVGQDFRWE (328 aa)) lie on the Lumenal side of the membrane. Residues 66–115 (LLAKSRPCDPPGPTPSEPSAPSAPAAAAPAPRLSGSNHSGSPKPGTKRLP) form a disordered region. Residues 73 to 83 (CDPPGPTPSEP) are compositionally biased toward pro residues. Residues 84 to 96 (SAPSAPAAAAPAP) show a composition bias toward low complexity. Residue asparagine 102 is glycosylated (N-linked (GlcNAc...) asparagine). 124–128 (KGGTR) serves as a coordination point for 3'-phosphoadenylyl sulfate. Substrate contacts are provided by residues 146–152 (EPHFFDR) and 177–180 (KTPS). An N-linked (GlcNAc...) asparagine glycan is attached at asparagine 193. 3'-phosphoadenylyl sulfate-binding residues include arginine 205 and serine 213. N-linked (GlcNAc...) asparagine glycosylation occurs at asparagine 235. Residue 245–246 (WN) coordinates substrate. N-linked (GlcNAc...) asparagine glycosylation is present at asparagine 306. A disulfide bridge connects residues cysteine 313 and cysteine 325. 330–334 (KGRTH) provides a ligand contact to 3'-phosphoadenylyl sulfate.

It belongs to the sulfotransferase 1 family.

It is found in the golgi apparatus membrane. It carries out the reaction alpha-D-glucosaminyl-[heparan sulfate](n) + 3'-phosphoadenylyl sulfate = 3-sulfo-alpha-D-glucosaminyl-[heparan sulfate](n) + adenosine 3',5'-bisphosphate + H(+). Sulfotransferase that utilizes 3'-phospho-5'-adenylyl sulfate (PAPS) to catalyze the transfer of a sulfo group to an N-unsubstituted glucosamine linked to a 2-O-sulfo iduronic acid unit on heparan sulfate. Catalyzes the O-sulfation of glucosamine in GlcA2S-GlcNS. Unlike HS3ST1/3-OST-1, does not convert non-anticoagulant heparan sulfate to anticoagulant heparan sulfate. This chain is Heparan sulfate glucosamine 3-O-sulfotransferase 2 (Hs3st2), found in Mus musculus (Mouse).